Reading from the N-terminus, the 203-residue chain is Glutathione S-transferase (203 aa).

Positions 2-79 (PDYKVYYFNV…YLANQVGLAG (78 aa)) constitute a GST N-terminal domain. Glutathione is bound by residues Tyr8, Trp39, Lys43, 49–51 (GQM), and 63–64 (QS). Positions 81 to 203 (DDWENLMIDT…YIAKRPITEV (123 aa)) constitute a GST C-terminal domain.

Belongs to the GST superfamily. Sigma family. In terms of assembly, homodimer.

It catalyses the reaction RX + glutathione = an S-substituted glutathione + a halide anion + H(+). Conjugation of reduced glutathione to a wide number of exogenous and endogenous hydrophobic electrophiles. The polypeptide is Glutathione S-transferase (GstS1) (Anopheles gambiae (African malaria mosquito)).